Reading from the N-terminus, the 284-residue chain is Bifunctional protein FolD (284 aa).

NADP(+)-binding positions include 165-167 (GRS) and serine 190.

It belongs to the tetrahydrofolate dehydrogenase/cyclohydrolase family. In terms of assembly, homodimer.

It carries out the reaction (6R)-5,10-methylene-5,6,7,8-tetrahydrofolate + NADP(+) = (6R)-5,10-methenyltetrahydrofolate + NADPH. The enzyme catalyses (6R)-5,10-methenyltetrahydrofolate + H2O = (6R)-10-formyltetrahydrofolate + H(+). It functions in the pathway one-carbon metabolism; tetrahydrofolate interconversion. Catalyzes the oxidation of 5,10-methylenetetrahydrofolate to 5,10-methenyltetrahydrofolate and then the hydrolysis of 5,10-methenyltetrahydrofolate to 10-formyltetrahydrofolate. This is Bifunctional protein FolD from Streptococcus pyogenes serotype M2 (strain MGAS10270).